The chain runs to 232 residues: tRNA1(Val) (adenine(37)-N6)-methyltransferase (232 aa).

Belongs to the methyltransferase superfamily. tRNA (adenine-N(6)-)-methyltransferase family.

It is found in the cytoplasm. It catalyses the reaction adenosine(37) in tRNA1(Val) + S-adenosyl-L-methionine = N(6)-methyladenosine(37) in tRNA1(Val) + S-adenosyl-L-homocysteine + H(+). Specifically methylates the adenine in position 37 of tRNA(1)(Val) (anticodon cmo5UAC). This is tRNA1(Val) (adenine(37)-N6)-methyltransferase from Haemophilus influenzae (strain PittEE).